A 92-amino-acid chain; its full sequence is cAMP-dependent protein kinase inhibitor beta (92 aa).

The disordered stretch occupies residues methionine 1 to glutamate 26. Residues proline 7–glutamate 26 are compositionally biased toward polar residues. Serine 56 carries the post-translational modification Phosphoserine. Basic and acidic residues predominate over residues glutamate 70–glycine 82. A disordered region spans residues glutamate 70 to lysine 92.

The protein belongs to the PKI family.

Its function is as follows. Extremely potent competitive inhibitor of cAMP-dependent protein kinase activity, this protein interacts with the catalytic subunit of the enzyme after the cAMP-induced dissociation of its regulatory chains. The sequence is that of cAMP-dependent protein kinase inhibitor beta (Pkib) from Mus musculus (Mouse).